The chain runs to 726 residues: NHL repeat-containing protein 2 (726 aa).

Residues 43 to 200 form the Thioredoxin domain; the sequence is QKVDGWEQDL…TSIALKYYKD (158 aa). NHL repeat units lie at residues 212–254, 265–307, 335–369, 409–439, 461–505, and 518–562; these read KLYK…VWKN, NPGR…IDLE, ISSP…IWAL, FAQP…VRTV, AFGD…VDPK, and TNNV…MDLE.

In terms of assembly, monomer. As to expression, ubiquitous. Detected in heart, kidney, muscle, brain, lung, liver and in skin fibroblasts (at protein level).

The protein localises to the cytoplasm. The protein resides in the cytosol. Required for normal embryonic development. This Homo sapiens (Human) protein is NHL repeat-containing protein 2 (NHLRC2).